A 200-amino-acid chain; its full sequence is SKP1-like protein 19 (200 aa).

Residues 67–92 (DDVVETHESSTKGDKTVEEAKKKPDD) are compositionally biased toward basic and acidic residues. The interval 67–109 (DDVVETHESSTKGDKTVEEAKKKPDDVAVPESTEGDDEAEDKK) is disordered. Residues 132 to 190 (ILAANYLNVQGLFDLCSKTIADYIKDMTPEEVRELFNIENDFTPEEEEAIRNENAWTFE) form an interaction with the F-box domain of F-box proteins region.

It belongs to the SKP1 family. Part of a SCF (SKP1-cullin-F-box) protein ligase complex. Interacts with CPR1/CPR30. As to expression, expressed in leaves and flowers.

The protein localises to the nucleus. Its pathway is protein modification; protein ubiquitination. Its function is as follows. Involved in ubiquitination and subsequent proteasomal degradation of target proteins. Together with CUL1, RBX1 and a F-box protein, it forms a SCF E3 ubiquitin ligase complex. The functional specificity of this complex depends on the type of F-box protein. In the SCF complex, it serves as an adapter that links the F-box protein to CUL1. This Arabidopsis thaliana (Mouse-ear cress) protein is SKP1-like protein 19 (ASK19).